The following is a 237-amino-acid chain: LexA repressor (237 aa).

The H-T-H motif DNA-binding region spans 26–46 (FDEMKEALDLRSKSGIHRLIT). Residues serine 158 and lysine 196 each act as for autocatalytic cleavage activity in the active site.

This sequence belongs to the peptidase S24 family. Homodimer.

It carries out the reaction Hydrolysis of Ala-|-Gly bond in repressor LexA.. Represses a number of genes involved in the response to DNA damage (SOS response), including recA and lexA. In the presence of single-stranded DNA, RecA interacts with LexA causing an autocatalytic cleavage which disrupts the DNA-binding part of LexA, leading to derepression of the SOS regulon and eventually DNA repair. This is LexA repressor from Xanthobacter autotrophicus (strain ATCC BAA-1158 / Py2).